A 729-amino-acid chain; its full sequence is ATP-dependent RNA helicase DHX15 homolog (729 aa).

The tract at residues 1 to 25 (MSKRRIEVGETYGSKAKKDPEASSS) is disordered. In terms of domain architecture, Helicase ATP-binding spans 82-246 (MRLLSLHQCI…FDNAPLMKVP (165 aa)). Residue 95–102 (GETGSGKT) coordinates ATP. The DEAH box motif lies at 193–196 (DEAH). A Helicase C-terminal domain is found at 271-451 (TVIQIHMCEE…TVVLQLKKLG (181 aa)).

Belongs to the DEAD box helicase family. DEAH subfamily. DDX15/PRP43 sub-subfamily.

The catalysed reaction is ATP + H2O = ADP + phosphate + H(+). RNA helicase involved in mRNA processing and antiviral innate immunity. Acts as an activator of the p38 MAPK cascade. The chain is ATP-dependent RNA helicase DHX15 homolog from Drosophila melanogaster (Fruit fly).